The sequence spans 449 residues: Tubulin alpha chain (449 aa).

GTP-binding residues include Q11, E71, S140, G144, T145, T179, N206, and N228. Residue E71 participates in Mg(2+) binding. E254 is a catalytic residue.

It belongs to the tubulin family. In terms of assembly, dimer of alpha and beta chains. A typical microtubule is a hollow water-filled tube with an outer diameter of 25 nm and an inner diameter of 15 nM. Alpha-beta heterodimers associate head-to-tail to form protofilaments running lengthwise along the microtubule wall with the beta-tubulin subunit facing the microtubule plus end conferring a structural polarity. Microtubules usually have 13 protofilaments but different protofilament numbers can be found in some organisms and specialized cells. It depends on Mg(2+) as a cofactor.

It is found in the cytoplasm. The protein resides in the cytoskeleton. It carries out the reaction GTP + H2O = GDP + phosphate + H(+). In terms of biological role, tubulin is the major constituent of microtubules, a cylinder consisting of laterally associated linear protofilaments composed of alpha- and beta-tubulin heterodimers. Microtubules grow by the addition of GTP-tubulin dimers to the microtubule end, where a stabilizing cap forms. Below the cap, tubulin dimers are in GDP-bound state, owing to GTPase activity of alpha-tubulin. This Pneumocystis carinii protein is Tubulin alpha chain (TUB1).